A 466-amino-acid chain; its full sequence is Collagenase 3 (466 aa).

A signal peptide spans Ala1–Ser13. The propeptide at Leu14–Val98 is activation peptide. Positions Pro89–Val96 match the Cysteine switch motif. Cys91 contacts Zn(2+). A glycan (N-linked (GlcNAc...) asparagine) is linked at Asn112. Residue Asp123 coordinates Ca(2+). Asn147 carries an N-linked (GlcNAc...) asparagine glycan. Asp157 is a Ca(2+) binding site. Residues His167 and Asp169 each coordinate Zn(2+). An interaction with TIMP2 region spans residues Tyr171 to Tyr241. 4 residues coordinate Ca(2+): Asp174, Gly175, Ser177, and Leu179. Zn(2+) is bound at residue His182. Residues Asn189, Gly191, and Asp193 each contribute to the Ca(2+) site. His195 is a binding site for Zn(2+). The Ca(2+) site is built by Asp197, Asp198, and Glu200. A Zn(2+)-binding site is contributed by His217. Glu218 is an active-site residue. His221, His227, and Met235 together coordinate Zn(2+). Residues Gln258–Cys279 are disordered. An interaction with collagen region spans residues Pro263–Cys466. The segment covering Pro268–Cys279 has biased composition (basic and acidic residues). Hemopexin repeat units follow at residues Pro276–Leu325, Pro326–Lys372, Val374–Ile422, and Gly423–Cys466. Residues Cys279 and Cys466 are joined by a disulfide bond. Ca(2+)-binding residues include Asp286, Ile288, Asp330, and Ala332. Tyr361 carries the phosphotyrosine; by PKDCC modification. Ser378 and Ala380 together coordinate Ca(2+). Asn404 carries an N-linked (GlcNAc...) asparagine glycan. The Ca(2+) site is built by Asp427 and Val429.

It belongs to the peptidase M10A family. Requires Ca(2+) as cofactor. It depends on Zn(2+) as a cofactor. Post-translationally, the proenzyme is activated by removal of the propeptide; this cleavage can be effected by other matrix metalloproteinases, such as MMP2, MMP3 and MMP14 and may involve several cleavage steps. Cleavage can also be autocatalytic, after partial maturation by another protease or after treatment with 4-aminophenylmercuric acetate (APMA) (in vitro). N-glycosylated. In terms of processing, tyrosine phosphorylated by PKDCC/VLK.

It localises to the secreted. The protein resides in the extracellular space. It is found in the extracellular matrix. Plays a role in the degradation of extracellular matrix proteins including fibrillar collagen, fibronectin, TNC and ACAN. Cleaves triple helical collagens, including type I, type II and type III collagen, but has the highest activity with soluble type II collagen. Can also degrade collagen type IV, type XIV and type X. May also function by activating or degrading key regulatory proteins, such as TGFB1 and CCN2. Plays a role in wound healing, tissue remodeling, cartilage degradation, bone development, bone mineralization and ossification. Required for normal embryonic bone development and ossification. Plays a role in the healing of bone fractures via endochondral ossification. Plays a role in wound healing, probably by a mechanism that involves proteolytic activation of TGFB1 and degradation of CCN2. Plays a role in keratinocyte migration during wound healing. May play a role in cell migration and in tumor cell invasion. This chain is Collagenase 3 (Mmp13), found in Rattus norvegicus (Rat).